Consider the following 283-residue polypeptide: Orotidine 5'-phosphate decarboxylase (283 aa).

The active-site Proton donor is the Lys97.

Belongs to the OMP decarboxylase family. Type 2 subfamily.

The catalysed reaction is orotidine 5'-phosphate + H(+) = UMP + CO2. Its pathway is pyrimidine metabolism; UMP biosynthesis via de novo pathway; UMP from orotate: step 2/2. This Clostridium botulinum (strain ATCC 19397 / Type A) protein is Orotidine 5'-phosphate decarboxylase.